The sequence spans 348 residues: Selenide, water dikinase (348 aa).

C17 is an active-site residue. Residues K20 and 47-49 (RAD) each bind ATP. D50 is a Mg(2+) binding site. ATP contacts are provided by residues D67, D90, and 138 to 140 (GHT). D90 lines the Mg(2+) pocket. Mg(2+) is bound at residue D226.

The protein belongs to the selenophosphate synthase 1 family. Class I subfamily. Homodimer. The cofactor is Mg(2+).

The enzyme catalyses hydrogenselenide + ATP + H2O = selenophosphate + AMP + phosphate + 2 H(+). Its function is as follows. Synthesizes selenophosphate from selenide and ATP. The chain is Selenide, water dikinase from Pelobacter propionicus (strain DSM 2379 / NBRC 103807 / OttBd1).